The sequence spans 398 residues: Mu-type opioid receptor (398 aa).

Over 1–66 the chain is Extracellular; that stretch reads MDSSAGPGNI…CPQTGSPSMV (66 aa). 4 N-linked (GlcNAc...) asparagine glycosylation sites follow: Asn-9, Asn-31, Asn-38, and Asn-46. The helical transmembrane segment at 67 to 91 threads the bilayer; sequence TAITIMALYSIVCVVGLFGNFLVMY. The Cytoplasmic portion of the chain corresponds to 92–104; the sequence is VIVRYTKMKTATN. Residues 105 to 129 traverse the membrane as a helical segment; sequence IYIFNLALADALATSTLPFQSVNYL. The Extracellular segment spans residues 130 to 140; it reads MGTWPFGNILC. A disulfide bridge connects residues Cys-140 and Cys-217. The chain crosses the membrane as a helical span at residues 141 to 163; that stretch reads KIVISIDYYNMFTSIFTLCTMSV. Over 164 to 183 the chain is Cytoplasmic; it reads DRYIAVCHPVKALDFRTPRN. Residue Tyr-166 is modified to Phosphotyrosine. Residues 184 to 205 form a helical membrane-spanning segment; that stretch reads AKIVNVCNWILSSAIGLPVMFM. Residues 206 to 228 lie on the Extracellular side of the membrane; that stretch reads ATTKYRQGSIDCTLTFSHPTWYW. Residues 229 to 253 form a helical membrane-spanning segment; sequence ENLLKICVFIFAFIMPVLIITVCYG. Over 254–277 the chain is Cytoplasmic; it reads LMILRLKSVRMLSGSKEKDRNLRR. The helical transmembrane segment at 278–304 threads the bilayer; sequence ITRMVLVVVAVFIVCWTPIHIYVIIKA. At 305-312 the chain is on the extracellular side; it reads LITIPETT. A helical transmembrane segment spans residues 313 to 336; that stretch reads FQTVSWHFCIALGYTNSCLNPVLY. The NPxxY; plays a role in stabilizing the activated conformation of the receptor signature appears at 332–336; that stretch reads NPVLY. The Cytoplasmic segment spans residues 337 to 398; it reads AFLDENFKRC…NLEAETAPLP (62 aa). Cys-351 carries the S-palmitoyl cysteine lipid modification. Residues 362–383 form a disordered region; sequence NSARIRQNTREHPSTANTVDRT. Ser-363 carries the post-translational modification Phosphoserine. Thr-370 bears the Phosphothreonine mark. Ser-375 bears the Phosphoserine mark. Phosphothreonine is present on Thr-394.

The protein belongs to the G-protein coupled receptor 1 family. In terms of assembly, forms homooligomers and heterooligomers with other GPCRs, such as OPRD1, OPRK1, OPRL1, NPFFR2, ADRA2A, SSTR2, CNR1 and CCR5 (probably in dimeric forms). Interacts with heterotrimeric G proteins; interaction with a heterotrimeric complex containing GNAI1, GNB1 and GNG2 stabilizes the active conformation of the receptor and increases its affinity for endomorphin-2, the synthetic opioid peptide DAMGO and for morphinan agonists. Interacts with PPL; the interaction disrupts agonist-mediated G-protein activation. Interacts (via C-terminus) with DNAJB4 (via C-terminus). Interacts with calmodulin; the interaction inhibits the constitutive activity of OPRM1; it abolishes basal and attenuates agonist-stimulated G-protein coupling. Interacts with FLNA, PLD2, RANBP9 and WLS and GPM6A. Interacts with RTP4. Interacts with SYP and GNAS. Interacts with RGS9, RGS17, RGS20, RGS4, PPP1R9B and HINT1. Isoform 9 interacts with GRPR. Post-translationally, phosphorylated. Differentially phosphorylated in basal and agonist-induced conditions. Agonist-mediated phosphorylation modulates receptor internalization. Phosphorylated by GRK2 in a agonist-dependent manner. Phosphorylation at Tyr-166 requires receptor activation, is dependent on non-receptor protein tyrosine kinase Src and results in a decrease in agonist efficacy by reducing G-protein coupling efficiency. Phosphorylated on tyrosine residues; the phosphorylation is involved in agonist-induced G-protein-independent receptor down-regulation. Phosphorylation at Ser-375 is involved in G-protein-dependent but not beta-arrestin-dependent activation of the ERK pathway. Ubiquitinated. A basal ubiquitination seems not to be related to degradation. Ubiquitination is increased upon formation of OPRM1:OPRD1 oligomers leading to proteasomal degradation; the ubiquitination is diminished by RTP4.

The protein localises to the cell membrane. It is found in the cell projection. Its subcellular location is the axon. The protein resides in the perikaryon. It localises to the dendrite. The protein localises to the endosome. In terms of biological role, receptor for endogenous opioids such as beta-endorphin and endomorphin. Receptor for natural and synthetic opioids including morphine, heroin, DAMGO, fentanyl, etorphine, buprenorphin and methadone. Also activated by enkephalin peptides, such as Met-enkephalin or Met-enkephalin-Arg-Phe, with higher affinity for Met-enkephalin-Arg-Phe. Agonist binding to the receptor induces coupling to an inactive GDP-bound heterotrimeric G-protein complex and subsequent exchange of GDP for GTP in the G-protein alpha subunit leading to dissociation of the G-protein complex with the free GTP-bound G-protein alpha and the G-protein beta-gamma dimer activating downstream cellular effectors. The agonist- and cell type-specific activity is predominantly coupled to pertussis toxin-sensitive G(i) and G(o) G alpha proteins, GNAI1, GNAI2, GNAI3 and GNAO1 isoforms Alpha-1 and Alpha-2, and to a lesser extent to pertussis toxin-insensitive G alpha proteins GNAZ and GNA15. They mediate an array of downstream cellular responses, including inhibition of adenylate cyclase activity and both N-type and L-type calcium channels, activation of inward rectifying potassium channels, mitogen-activated protein kinase (MAPK), phospholipase C (PLC), phosphoinositide/protein kinase (PKC), phosphoinositide 3-kinase (PI3K) and regulation of NF-kappa-B. Also couples to adenylate cyclase stimulatory G alpha proteins. The selective temporal coupling to G-proteins and subsequent signaling can be regulated by RGSZ proteins, such as RGS9, RGS17 and RGS4. Phosphorylation by members of the GPRK subfamily of Ser/Thr protein kinases and association with beta-arrestins is involved in short-term receptor desensitization. Beta-arrestins associate with the GPRK-phosphorylated receptor and uncouple it from the G-protein thus terminating signal transduction. The phosphorylated receptor is internalized through endocytosis via clathrin-coated pits which involves beta-arrestins. The activation of the ERK pathway occurs either in a G-protein-dependent or a beta-arrestin-dependent manner and is regulated by agonist-specific receptor phosphorylation. Acts as a class A G-protein coupled receptor (GPCR) which dissociates from beta-arrestin at or near the plasma membrane and undergoes rapid recycling. Receptor down-regulation pathways are varying with the agonist and occur dependent or independent of G-protein coupling. Endogenous ligands induce rapid desensitization, endocytosis and recycling. Heterooligomerization with other GPCRs can modulate agonist binding, signaling and trafficking properties. Its function is as follows. Isoform 9 is involved in morphine-induced scratching and seems to cross-activate GRPR in response to morphine. The chain is Mu-type opioid receptor (Oprm1) from Mus musculus (Mouse).